A 529-amino-acid polypeptide reads, in one-letter code: Peptide chain release factor 3 (529 aa).

The 270-residue stretch at 11–280 folds into the tr-type G domain; it reads AKRRTFAIIS…GLVAWAPAPM (270 aa). GTP contacts are provided by residues 20–27, 88–92, and 142–145; these read SHPDAGKT, DTPGH, and NKLD.

Belongs to the TRAFAC class translation factor GTPase superfamily. Classic translation factor GTPase family. PrfC subfamily.

It is found in the cytoplasm. Increases the formation of ribosomal termination complexes and stimulates activities of RF-1 and RF-2. It binds guanine nucleotides and has strong preference for UGA stop codons. It may interact directly with the ribosome. The stimulation of RF-1 and RF-2 is significantly reduced by GTP and GDP, but not by GMP. This chain is Peptide chain release factor 3, found in Salmonella gallinarum (strain 287/91 / NCTC 13346).